The sequence spans 372 residues: L-selectin (372 aa).

Positions 1-28 (MIFPWKCQSTQRDLWNIFKLWGWTMLCC) are cleaved as a signal peptide. Residues 29–38 (DFLAHHGTDC) constitute a propeptide that is removed on maturation. Residues 39–332 (WTYHYSEKPM…FSMIKEGDYN (294 aa)) are Extracellular-facing. The region spanning 55–155 (RFCRDNYTDL…ACHKLKAALC (101 aa)) is the C-type lectin domain. Cystine bridges form between C57–C155, C128–C147, C160–C171, C165–C180, C182–C191, C197–C241, C227–C254, C259–C303, and C289–C316. 2 N-linked (GlcNAc...) asparagine glycosylation sites follow: N60 and N104. The Ca(2+) site is built by E118, N120, E126, N143, and D144. Positions 156-192 (YTASCQPWSCSGHGECVEIINNYTCNCDVGYYGPQCQ) constitute an EGF-like domain. N177 is a glycosylation site (N-linked (GlcNAc...) asparagine). Sushi domains are found at residues 195 to 256 (IQCE…TCQV) and 257 to 318 (IQCE…ICQK). N232, N246, and N271 each carry an N-linked (GlcNAc...) asparagine glycan. A helical transmembrane segment spans residues 333–355 (PLFIPVAVMVTAFSGLAFIIWLA). Topologically, residues 356–372 (RRLKKGKKSKRSMNDPY) are cytoplasmic.

Belongs to the selectin/LECAM family. As to quaternary structure, interaction with SELPLG/PSGL1 and PODXL2 is required for promoting recruitment and rolling of leukocytes. This interaction is dependent on the sialyl Lewis X glycan modification of SELPLG and PODXL2, and tyrosine sulfation modifications of SELPLG. Sulfation on 'Tyr-51' of SELPLG is important for L-selectin binding. Post-translationally, N-glycosylated. Expressed in B-cell lines and T-lymphocytes.

The protein resides in the cell membrane. Functionally, calcium-dependent lectin that mediates cell adhesion by binding to glycoproteins on neighboring cells. Mediates the adherence of lymphocytes to endothelial cells of high endothelial venules in peripheral lymph nodes. Promotes initial tethering and rolling of leukocytes in endothelia. The polypeptide is L-selectin (SELL) (Homo sapiens (Human)).